The chain runs to 775 residues: Putative ankyrin repeat protein RBE_0801 (775 aa).

ANK repeat units lie at residues 66–95, 300–329, 331–356, 357–385, 447–476, and 523–552; these read HSLP…ENTE, ATTV…KVEN, ILQE…IKSF, TNDY…NIVG, IPDV…SFDF, and GDDK…KQGI.

The chain is Putative ankyrin repeat protein RBE_0801 from Rickettsia bellii (strain RML369-C).